We begin with the raw amino-acid sequence, 103 residues long: Histone H4 (103 aa).

The segment covering Met-1–Gly-14 has biased composition (gly residues). The segment at Met-1–Arg-20 is disordered. An N-acetylserine modification is found at Ser-2. Lys-17 is modified (N6-acetyllysine). Residues Lys-17–Arg-21 mediate DNA binding. Lys-80 is modified (N6-methylated lysine).

This sequence belongs to the histone H4 family. In terms of assembly, the nucleosome is a histone octamer containing two molecules each of H2A, H2B, H3 and H4 assembled in one H3-H4 heterotetramer and two H2A-H2B heterodimers. The octamer wraps approximately 147 bp of DNA.

The protein localises to the nucleus. It localises to the chromosome. Functionally, core component of nucleosome. Nucleosomes wrap and compact DNA into chromatin, limiting DNA accessibility to the cellular machineries which require DNA as a template. Histones thereby play a central role in transcription regulation, DNA repair, DNA replication and chromosomal stability. DNA accessibility is regulated via a complex set of post-translational modifications of histones, also called histone code, and nucleosome remodeling. In Olisthodiscus luteus (Marine phytoflagellate), this protein is Histone H4.